The primary structure comprises 232 residues: 2-C-methyl-D-erythritol 4-phosphate cytidylyltransferase (232 aa).

The protein belongs to the IspD/TarI cytidylyltransferase family. IspD subfamily.

The catalysed reaction is 2-C-methyl-D-erythritol 4-phosphate + CTP + H(+) = 4-CDP-2-C-methyl-D-erythritol + diphosphate. It participates in isoprenoid biosynthesis; isopentenyl diphosphate biosynthesis via DXP pathway; isopentenyl diphosphate from 1-deoxy-D-xylulose 5-phosphate: step 2/6. Functionally, catalyzes the formation of 4-diphosphocytidyl-2-C-methyl-D-erythritol from CTP and 2-C-methyl-D-erythritol 4-phosphate (MEP). The protein is 2-C-methyl-D-erythritol 4-phosphate cytidylyltransferase of Stenotrophomonas maltophilia (strain K279a).